Reading from the N-terminus, the 160-residue chain is Phosphopantetheine adenylyltransferase (160 aa).

T10 is a binding site for substrate. ATP contacts are provided by residues T10 to F11 and H18. Residues K42, M74, and R88 each contribute to the substrate site. Residues G89–R91, E99, and L124–S130 contribute to the ATP site.

This sequence belongs to the bacterial CoaD family. In terms of assembly, homohexamer. Requires Mg(2+) as cofactor.

Its subcellular location is the cytoplasm. It carries out the reaction (R)-4'-phosphopantetheine + ATP + H(+) = 3'-dephospho-CoA + diphosphate. The protein operates within cofactor biosynthesis; coenzyme A biosynthesis; CoA from (R)-pantothenate: step 4/5. Reversibly transfers an adenylyl group from ATP to 4'-phosphopantetheine, yielding dephospho-CoA (dPCoA) and pyrophosphate. The sequence is that of Phosphopantetheine adenylyltransferase from Photorhabdus laumondii subsp. laumondii (strain DSM 15139 / CIP 105565 / TT01) (Photorhabdus luminescens subsp. laumondii).